Reading from the N-terminus, the 264-residue chain is 3-methyl-2-oxobutanoate hydroxymethyltransferase (264 aa).

Mg(2+)-binding residues include aspartate 45 and aspartate 84. 3-methyl-2-oxobutanoate contacts are provided by residues 45–46 (DS), aspartate 84, and lysine 112. Residue glutamate 114 coordinates Mg(2+). Glutamate 181 acts as the Proton acceptor in catalysis.

Belongs to the PanB family. In terms of assembly, homodecamer; pentamer of dimers. The cofactor is Mg(2+).

Its subcellular location is the cytoplasm. The catalysed reaction is 3-methyl-2-oxobutanoate + (6R)-5,10-methylene-5,6,7,8-tetrahydrofolate + H2O = 2-dehydropantoate + (6S)-5,6,7,8-tetrahydrofolate. It functions in the pathway cofactor biosynthesis; (R)-pantothenate biosynthesis; (R)-pantoate from 3-methyl-2-oxobutanoate: step 1/2. Functionally, catalyzes the reversible reaction in which hydroxymethyl group from 5,10-methylenetetrahydrofolate is transferred onto alpha-ketoisovalerate to form ketopantoate. This chain is 3-methyl-2-oxobutanoate hydroxymethyltransferase, found in Shigella boydii serotype 18 (strain CDC 3083-94 / BS512).